A 165-amino-acid chain; its full sequence is Xanthine-guanine phosphoribosyltransferase (165 aa).

5-phospho-alpha-D-ribose 1-diphosphate is bound by residues 41 to 42 (RG) and 98 to 106 (DDLTDTGKT). Aspartate 99 contributes to the Mg(2+) binding site. 2 residues coordinate guanine: aspartate 102 and isoleucine 145. Xanthine-binding residues include aspartate 102 and isoleucine 145. GMP is bound by residues 102–106 (DTGKT) and 144–145 (WI).

Belongs to the purine/pyrimidine phosphoribosyltransferase family. XGPT subfamily. As to quaternary structure, homotetramer. Requires Mg(2+) as cofactor.

Its subcellular location is the cell inner membrane. The catalysed reaction is GMP + diphosphate = guanine + 5-phospho-alpha-D-ribose 1-diphosphate. The enzyme catalyses XMP + diphosphate = xanthine + 5-phospho-alpha-D-ribose 1-diphosphate. It catalyses the reaction IMP + diphosphate = hypoxanthine + 5-phospho-alpha-D-ribose 1-diphosphate. The protein operates within purine metabolism; GMP biosynthesis via salvage pathway; GMP from guanine: step 1/1. It functions in the pathway purine metabolism; XMP biosynthesis via salvage pathway; XMP from xanthine: step 1/1. Functionally, purine salvage pathway enzyme that catalyzes the transfer of the ribosyl-5-phosphate group from 5-phospho-alpha-D-ribose 1-diphosphate (PRPP) to the N9 position of the 6-oxopurines guanine and xanthine to form the corresponding ribonucleotides GMP (guanosine 5'-monophosphate) and XMP (xanthosine 5'-monophosphate), with the release of PPi. To a lesser extent, also acts on hypoxanthine. This is Xanthine-guanine phosphoribosyltransferase from Rhizobium meliloti (strain 1021) (Ensifer meliloti).